Reading from the N-terminus, the 306-residue chain is Aspartate carbamoyltransferase catalytic subunit (306 aa).

Positions 54 and 55 each coordinate carbamoyl phosphate. Lys-83 contacts L-aspartate. Residues Arg-104, His-132, and Gln-135 each coordinate carbamoyl phosphate. 2 residues coordinate L-aspartate: Arg-165 and Arg-227. 2 residues coordinate carbamoyl phosphate: Leu-266 and Pro-267.

This sequence belongs to the aspartate/ornithine carbamoyltransferase superfamily. ATCase family. In terms of assembly, heterododecamer (2C3:3R2) of six catalytic PyrB chains organized as two trimers (C3), and six regulatory PyrI chains organized as three dimers (R2).

The catalysed reaction is carbamoyl phosphate + L-aspartate = N-carbamoyl-L-aspartate + phosphate + H(+). Its pathway is pyrimidine metabolism; UMP biosynthesis via de novo pathway; (S)-dihydroorotate from bicarbonate: step 2/3. In terms of biological role, catalyzes the condensation of carbamoyl phosphate and aspartate to form carbamoyl aspartate and inorganic phosphate, the committed step in the de novo pyrimidine nucleotide biosynthesis pathway. The protein is Aspartate carbamoyltransferase catalytic subunit of Finegoldia magna (strain ATCC 29328 / DSM 20472 / WAL 2508) (Peptostreptococcus magnus).